A 293-amino-acid polypeptide reads, in one-letter code: tRNA-cytidine(32) 2-sulfurtransferase (293 aa).

The PP-loop motif signature appears at 62–67 (SGGKDS). Positions 137, 140, and 228 each coordinate [4Fe-4S] cluster.

Belongs to the TtcA family. As to quaternary structure, homodimer. It depends on Mg(2+) as a cofactor. The cofactor is [4Fe-4S] cluster.

The protein localises to the cytoplasm. The catalysed reaction is cytidine(32) in tRNA + S-sulfanyl-L-cysteinyl-[cysteine desulfurase] + AH2 + ATP = 2-thiocytidine(32) in tRNA + L-cysteinyl-[cysteine desulfurase] + A + AMP + diphosphate + H(+). Its pathway is tRNA modification. Functionally, catalyzes the ATP-dependent 2-thiolation of cytidine in position 32 of tRNA, to form 2-thiocytidine (s(2)C32). The sulfur atoms are provided by the cysteine/cysteine desulfurase (IscS) system. This is tRNA-cytidine(32) 2-sulfurtransferase from Brucella suis (strain ATCC 23445 / NCTC 10510).